The primary structure comprises 458 residues: MASTITGSQDCIVNHRGEVDGEPELDISPCQQWGEASSPISRNRDSVMTLQSGCFENIESETYLPLKVSSQIDTQDSSVKFCKNEPQDHQESRRLFVMEESTERKVIKGESCSENLQVKLVSDGQELASPLLNGEATCQNGQLKESLDPIDCNCKDIHGWKSQVVSCSQQRAHTEEKPCDHNNCGKILNTSPDGHPYEKIHTAEKQYECSQCGKNFSQSSELLLHQRDHTEEKPYKCEQCGKGFTRSSSLLIHQAVHTDEKPYKCDKCGKGFTRSSSLLIHHAVHTGEKPYKCDKCGKGFSQSSKLHIHQRVHTGEKPYECEECGMSFSQRSNLHIHQRVHTGERPYKCGECGKGFSQSSNLHIHRCIHTGEKPYQCYECGKGFSQSPDLRIHLRVHTGEKPYHCGKCGKGFSQSSKLLIHQRVHTGEKPYECSKCGKGFSQSSNLHIHQRVHKKDPR.

A Glycyl lysine isopeptide (Lys-Gly) (interchain with G-Cter in SUMO2) cross-link involves residue Lys108. The residue at position 191 (Ser191) is a Phosphoserine. 9 C2H2-type zinc fingers span residues Tyr207 to His229, Tyr235 to His257, Tyr263 to His285, Tyr291 to His313, Tyr319 to His341, Tyr347 to His369, Tyr375 to His397, Tyr403 to His425, and Tyr431 to His453.

It belongs to the krueppel C2H2-type zinc-finger protein family.

It localises to the nucleus. In terms of biological role, may be involved in transcriptional regulation. The chain is Zinc finger protein 239 (ZNF239) from Pongo abelii (Sumatran orangutan).